A 678-amino-acid polypeptide reads, in one-letter code: DNA ligase (678 aa).

Residues 47–51, 96–97, and E122 contribute to the NAD(+) site; these read DSDYD and SL. The N6-AMP-lysine intermediate role is filled by K124. NAD(+) is bound by residues R145, E182, K300, and K324. 4 residues coordinate Zn(2+): C418, C421, C436, and C442. Residues 602-678 enclose the BRCT domain; it reads AYNESFTGKT…ILEDNLKDLL (77 aa).

The protein belongs to the NAD-dependent DNA ligase family. LigA subfamily. Requires Mg(2+) as cofactor. It depends on Mn(2+) as a cofactor.

It catalyses the reaction NAD(+) + (deoxyribonucleotide)n-3'-hydroxyl + 5'-phospho-(deoxyribonucleotide)m = (deoxyribonucleotide)n+m + AMP + beta-nicotinamide D-nucleotide.. DNA ligase that catalyzes the formation of phosphodiester linkages between 5'-phosphoryl and 3'-hydroxyl groups in double-stranded DNA using NAD as a coenzyme and as the energy source for the reaction. It is essential for DNA replication and repair of damaged DNA. The chain is DNA ligase from Francisella tularensis subsp. tularensis (strain SCHU S4 / Schu 4).